A 264-amino-acid chain; its full sequence is Glutamate racemase (264 aa).

Residues 10-11 (DS) and 42-43 (YG) each bind substrate. Cysteine 73 (proton donor/acceptor) is an active-site residue. 74 to 75 (NT) contributes to the substrate binding site. The Proton donor/acceptor role is filled by cysteine 181. 182–183 (TH) contacts substrate.

The protein belongs to the aspartate/glutamate racemases family.

It catalyses the reaction L-glutamate = D-glutamate. Its pathway is cell wall biogenesis; peptidoglycan biosynthesis. Provides the (R)-glutamate required for cell wall biosynthesis. The polypeptide is Glutamate racemase (Thermoanaerobacter sp. (strain X514)).